The chain runs to 158 residues: Complexin-3 (158 aa).

The interval 14-47 (KNLTGSLGGGEDKGDGDKSAAEAQGMSREEYEEY) is disordered. Residues 23 to 33 (GEDKGDGDKSA) show a composition bias toward basic and acidic residues. Positions 39–74 (MSREEYEEYQKQLVEEKMERDAQFTQRKAERATLRS) form a coiled coil. The residue at position 155 (C155) is a Cysteine methyl ester. Residue C155 is the site of S-farnesyl cysteine attachment. A propeptide spans 156 to 158 (HIM) (removed in mature form).

It belongs to the complexin/synaphin family. As to quaternary structure, binds to the SNARE core complex containing SNAP25, VAMP2 and STX1A. Farnesylation mediates presynaptic targeting. In terms of tissue distribution, present in many brain regions, including hippocampus and cerebellum (at protein level). Expressed in the retina (at protein level). Expressed in retinal amacrine cells (at protein level). Expressed in retinal photoreceptor ribbon synapses. Expressed in the retinal inner nuclear layer, at bipolar cells (at protein level). Expressed in cone photoreceptor synaptic terminals (at protein level).

The protein localises to the synapse. It localises to the cell membrane. Functionally, complexin that regulates SNARE protein complex-mediated synaptic vesicle fusion. Required for the maintenance of synaptic ultrastructure in the adult retina. Positively regulates synaptic transmission through synaptic vesicle availability and exocytosis of neurotransmitters at photoreceptor ribbon synapses in the retina. Suppresses tonic photoreceptor activity and baseline 'noise' by suppression of Ca(2+) vesicle tonic release and the facilitation of evoked synchronous and asynchronous Ca(2+) vesicle release. The polypeptide is Complexin-3 (Cplx3) (Mus musculus (Mouse)).